The primary structure comprises 860 residues: Mycobactin import ATP-binding/permease protein IrtA (860 aa).

The Cytoplasmic segment spans residues 1 to 293 (MARGIQGVMM…GRLLAPLKTT (293 aa)). Residues 15–124 (ARDHQATVVS…LGSAGFSVPE (110 aa)) form the FAD-binding FR-type domain. FAD-binding positions include 70–73 (RAYT), 87–91 (DVVLH), 97–98 (AS), and 238–240 (TEG). Residues 242–275 (AMGTKRGDDDKTPEVNPAPRADKPEAPAPAAAGR) are disordered. Residues 294-314 (LIISGVLQAIITLVQLAPFVL) form a helical membrane-spanning segment. The ABC transmembrane type-1 domain occupies 295-577 (IISGVLQAII…IAYGLGGIRG (283 aa)). Over 315–335 (LVELARLLLSGASSDRLWTLG) the chain is Periplasmic. The helical transmembrane segment at 336-356 (VVAISLLGTGSFLAAALTLWL) threads the bilayer. Residues 357-409 (HLVDARFARDLRTGLLTKMSRLPLGWFTARGSGSIKQLVQDDTLSLHYLITHA) lie on the Cytoplasmic side of the membrane. A helical membrane pass occupies residues 410–430 (IPDAVAAVIAPVAVLVYLFVV). At 431 to 433 (DWR) the chain is on the periplasmic side. The helical transmembrane segment at 434–454 (LALVMFVPVLIYLVLMTVMTI) threads the bilayer. Over 455-525 (QSGPKIAQSQ…KKSMMDLVTR (71 aa)) the chain is Cytoplasmic. A helical membrane pass occupies residues 526–546 (PGTFLWLIVAVGTPMITSGAM). At 547–550 (DPVD) the chain is on the periplasmic side. Residues 551–571 (ILPFLLLGTTFGVRLLGIAYG) form a helical membrane-spanning segment. Residues 572 to 860 (LGGIRGGMLA…AAGPTGEAVR (289 aa)) are Cytoplasmic-facing. One can recognise an ABC transporter domain in the interval 609 to 842 (VVFDNVTFGY…AGRYRQLWET (234 aa)). 642 to 649 (GPSGSGKS) is a binding site for ATP.

This sequence belongs to the ABC transporter superfamily. Siderophore-Fe(3+) uptake transporter (SIUT) (TC 3.A.1.21) family. Forms a heterodimer with IrtB. It depends on FAD as a cofactor.

The protein resides in the cell inner membrane. Functionally, part of the ABC transporter complex IrtAB involved in the import of iron-bound mycobactin (Fe-MBT) and carboxymycobactin (Fe-cMBT). Has a preference for Fe-MBT over Fe-cMBT. Mycobactins are then reduced by the siderophore interaction domain to facilitate iron release in the bacterial cell. Transmembrane domains (TMD) form a pore in the membrane and the ATP-binding domain (NBD) is responsible for energy generation. This Mycolicibacterium smegmatis (strain ATCC 700084 / mc(2)155) (Mycobacterium smegmatis) protein is Mycobactin import ATP-binding/permease protein IrtA.